Consider the following 280-residue polypeptide: Fructose-1,6-bisphosphatase class 1 (280 aa).

Residues E64, D83, L85, and D86 each contribute to the Mg(2+) site. Residues 86 to 89, Y189, and K220 contribute to the substrate site; that span reads DGSS. Mg(2+) is bound at residue E226.

Belongs to the FBPase class 1 family. In terms of assembly, homotetramer. The cofactor is Mg(2+).

It localises to the cytoplasm. It carries out the reaction beta-D-fructose 1,6-bisphosphate + H2O = beta-D-fructose 6-phosphate + phosphate. It participates in carbohydrate biosynthesis; gluconeogenesis. The chain is Fructose-1,6-bisphosphatase class 1 from Campylobacter jejuni subsp. jejuni serotype O:23/36 (strain 81-176).